Reading from the N-terminus, the 540-residue chain is Glucose-6-phosphate isomerase (540 aa).

The active-site Proton donor is E350. Active-site residues include H381 and K503.

It belongs to the GPI family.

The protein localises to the cytoplasm. The enzyme catalyses alpha-D-glucose 6-phosphate = beta-D-fructose 6-phosphate. It participates in carbohydrate biosynthesis; gluconeogenesis. It functions in the pathway carbohydrate degradation; glycolysis; D-glyceraldehyde 3-phosphate and glycerone phosphate from D-glucose: step 2/4. Its function is as follows. Catalyzes the reversible isomerization of glucose-6-phosphate to fructose-6-phosphate. This chain is Glucose-6-phosphate isomerase, found in Burkholderia ambifaria (strain MC40-6).